The following is a 415-amino-acid chain: DNA double-strand break repair protein Mre11 (415 aa).

The Mn(2+) site is built by Asp-10, His-12, Asp-51, and Asn-86. Residue His-87 is the Proton donor of the active site. Mn(2+) is bound by residues His-174, His-208, and His-210.

Belongs to the MRE11/RAD32 family. As to quaternary structure, homodimer. Forms a heterotetramer composed of two Mre11 subunits and two Rad50 subunits. It depends on Mn(2+) as a cofactor.

Its activity is regulated as follows. Nuclease activity is regulated by Rad50. In terms of biological role, part of the Rad50/Mre11 complex, which is involved in the early steps of DNA double-strand break (DSB) repair. The complex may facilitate opening of the processed DNA ends to aid in the recruitment of HerA and NurA. Mre11 binds to DSB ends and has both double-stranded 3'-5' exonuclease activity and single-stranded endonuclease activity. This is DNA double-strand break repair protein Mre11 from Pyrococcus abyssi (strain GE5 / Orsay).